The primary structure comprises 8903 residues: Nonribosomal peptide synthetase vlms (8903 aa).

The Carrier 1 domain occupies 11–84 (GSCRTTLGKV…ELADSIDEQN (74 aa)). The thiolation (T) domain 1 stretch occupies residues 13-81 (CRTTLGKVAA…TLAELADSID (69 aa)). O-(pantetheine 4'-phosphoryl)serine is present on S45. Adenylation (A) domain regions lie at residues 59-736 (GIWV…SHLP) and 989-1386 (MAAQ…IKIR). Residues 572 to 953 (VPHQLDTEKL…FLLDGVNMSI (382 aa)) form a condensation (C) domain 1 region. The Carrier 2 domain occupies 1524-1600 (SSMSTVEQEL…QLALAAESQA (77 aa)). Residues 1529-1597 (VEQELRQIWS…TIPQLALAAE (69 aa)) form a thiolation (T) domain 2 region. An O-(pantetheine 4'-phosphoryl)serine modification is found at S1561. Residues 1613-2050 (FPLSPIQKMY…TVKELAAVSA (438 aa)) are epimerase (E) domain 1. The segment at 2091 to 2523 (DILPCSPIQQ…LLSVSEENKL (433 aa)) is condensation (C) domain 2. The segment at 2546-2943 (MSSHADATAI…GRQDSQVKIR (398 aa)) is adenylation (A) domain 2. Positions 3084–3160 (LFTTAIERQL…ELALQAKMVD (77 aa)) constitute a Carrier 3 domain. The interval 3089–3157 (IERQLRQVWS…TIPELALQAK (69 aa)) is thiolation (T) domain 3. Position 3121 is an O-(pantetheine 4'-phosphoryl)serine (S3121). The tract at residues 3174 to 3614 (FALSPIQQMY…AIKSLVEELM (441 aa)) is epimerase (E) domain 2. The segment at 3655 to 4093 (EDILPCSPMQ…LMSTKDIQQL (439 aa)) is condensation (C) domain 3. The adenylation (A) domain 3 stretch occupies residues 4114-4512 (ERLNTQPESM…GRIDTQIKIR (399 aa)). The region spanning 4649 to 4725 (APRTTMEKKL…DLAEATELKC (77 aa)) is the Carrier 4 domain. Positions 4654–4722 (MEKKLRDLFA…ILADLAEATE (69 aa)) are thiolation (T) domain 4. S4686 carries the post-translational modification O-(pantetheine 4'-phosphoryl)serine. The segment at 4775 to 5191 (EDVYPCSPLQ…AQLQMLSEED (417 aa)) is condensation (C) domain 4. The segment at 5216 to 5614 (ETMTSQPDAP…GRRDTQVKIR (399 aa)) is adenylation (A) domain 4. The region spanning 5753–5829 (APTTAMEKRL…DLAQELEQRH (77 aa)) is the Carrier 5 domain. A thiolation (T) domain 5 region spans residues 5758 to 5826 (MEKRLQNLFC…RLGDLAQELE (69 aa)). S5790 carries the post-translational modification O-(pantetheine 4'-phosphoryl)serine. E5875 is a region of interest (condensation (C) domain 5). The adenylation (A) domain 5 stretch occupies residues 6311 to 6702 (EEQMSLRPSE…GRMDGQIKIR (392 aa)). Residues 6836–6912 (SSATNTERQL…ELAATLEVMD (77 aa)) form the Carrier 6 domain. The tract at residues 6841 to 6909 (TERQLRQIWS…TIPELAATLE (69 aa)) is thiolation (T) domain 6. S6873 bears the O-(pantetheine 4'-phosphoryl)serine mark. The interval 6923–7349 (GFFELSPIQR…YGRTIKTLVE (427 aa)) is epimerase (E) domain 3. Residues 7391–7823 (EDILPCSPIQ…LVLTNDEAQI (433 aa)) form a condensation (C) domain 6 region. Positions 7844–8240 (EQMARKPEAQ…LDRIGTQVKI (397 aa)) are adenylation (A) domain 6. Residues 8368 to 8444 (APISATEAVF…AMAACVSDVS (77 aa)) form the Carrier 7 domain. Residues 8369–8441 (PISATEAVFC…VLHAMAACVS (73 aa)) are thiolation (T) domain 7. S8405 carries the O-(pantetheine 4'-phosphoryl)serine modification. Residues 8482 to 8897 (DVLPTTEFQT…MENPRSTVGH (416 aa)) are condensation (C) domain 7.

The protein belongs to the NRP synthetase family.

The protein operates within secondary metabolite biosynthesis. Nonribosomal peptide synthetase; part of the gene cluster that mediates the biosynthesis of verlamelin, a lipopeptide that exhibits antifungal activity against plant pathogenic fungi. Verlamelin is a cyclic hexadepsipeptide and is bridged by ester bonding between a 5-hydroxytetradecanoic acid moiety and a carboxyl group on the terminal Val of amide-bonded tetradecanoyl-hexapeptide D-allo-Thr-D-Ala-L-Pro-L-Gln-D-Tyr-L-Val. VlmA and vlmB are altogether regarded as essential components in the biosynthesis of 5-hydroxytetradecanoic acid. VlmA catalyzes the hydroxylation at position C5 of tetradecanoic acid produced in primary metabolism, while the precise function of vlmB still remains to be solved. To be loaded onto the waiting NRPS, 5-hydroxytetradecanoic acid is activated in the form of acyladenylate by the AMP-dependent ligase vlmC. VlmS seems to accept the fatty-acyl intermediate onto the initial module to further elongate amino acid residues by the downstream modules. In addition, in the last module at its C-terminus, vlmS contains a surplus condensation (C) domain that may be involved in cyclization, the last step to form verlamelin. The sequence is that of Nonribosomal peptide synthetase vlms from Lecanicillium sp.